A 953-amino-acid polypeptide reads, in one-letter code: Nonsense-mediated mRNA decay factor SMG8 (953 aa).

Disordered stretches follow at residues 571-604 (AEDAELDPDEEDEELPTGEREEQHITQSNGCSQP) and 629-653 (PCFDQSSSSEAESTCSGTSSEESNT). The span at 573-586 (DAELDPDEEDEELP) shows a compositional bias: acidic residues. Residues 595–604 (ITQSNGCSQP) are compositionally biased toward polar residues. The span at 634-653 (SSSSEAESTCSGTSSEESNT) shows a compositional bias: low complexity.

It belongs to the SMG8 family.

Involved in nonsense-mediated decay (NMD) of mRNAs containing premature stop codons. Probable component of kinase complex containing nonC and recruited to stalled ribosomes. The polypeptide is Nonsense-mediated mRNA decay factor SMG8 (Drosophila pseudoobscura pseudoobscura (Fruit fly)).